A 502-amino-acid polypeptide reads, in one-letter code: Protein O-glucosyltransferase 2 (502 aa).

An N-terminal signal peptide occupies residues methionine 1–alanine 19. Residues glutamate 24–glycine 130 form a Filamin repeat. N-linked (GlcNAc...) asparagine glycans are attached at residues asparagine 302 and asparagine 414. The Prevents secretion from ER signature appears at lysine 499 to leucine 502.

Belongs to the KDELC family. Post-translationally, N-glycosylated.

The protein resides in the endoplasmic reticulum lumen. It carries out the reaction L-seryl-[EGF-like domain protein] + UDP-alpha-D-glucose = 3-O-(beta-D-glucosyl)-L-seryl-[EGF-like domain protein] + UDP + H(+). The catalysed reaction is L-seryl-[EGF-like domain protein] + UDP-alpha-D-xylose = 3-O-(beta-D-xylosyl)-L-seryl-[EGF-like domain protein] + UDP + H(+). The protein operates within protein modification; protein glycosylation. In terms of biological role, protein glucosyltransferase that catalyzes the transfer of glucose from UDP-glucose to a serine residue within the consensus sequence peptide C-X-N-T-X-G-S-F-X-C. Can also catalyze the transfer of xylose from UDP-xylose but less efficiently. Specifically targets extracellular EGF repeats of proteins such as NOTCH1, NOTCH3, FBN1, FBN2 and LTBP1. May regulate the transport of NOTCH1 and NOTCH3 to the plasma membrane and thereby the Notch signaling pathway. The protein is Protein O-glucosyltransferase 2 of Homo sapiens (Human).